We begin with the raw amino-acid sequence, 467 residues long: Glycogen synthase kinase-3 (467 aa).

Residues 1–20 show a composition bias toward basic and acidic residues; the sequence is MSSKDQILEKDKKETDDNGN. The disordered stretch occupies residues 1-42; the sequence is MSSKDQILEKDKKETDDNGNKKTTTTTSSSSSSSSSSKPRSN. Over residues 23–37 the composition is skewed to low complexity; it reads TTTTTSSSSSSSSSS. The Protein kinase domain occupies 56-339; sequence YITEGVIGNG…PVEICAHPFF (284 aa). ATP-binding positions include 62 to 70 and Lys85; that span reads IGNGSFGVV. Asp179 acts as the Proton acceptor in catalysis. 2 positions are modified to phosphotyrosine; by zakA: Tyr214 and Tyr220. Residues 400–467 form a disordered region; sequence SSNQSSSSNS…TTTTTTTSNH (68 aa).

Belongs to the protein kinase superfamily. CMGC Ser/Thr protein kinase family. GSK-3 subfamily. Requires Mg(2+) as cofactor.

The catalysed reaction is L-seryl-[tau protein] + ATP = O-phospho-L-seryl-[tau protein] + ADP + H(+). It carries out the reaction L-threonyl-[tau protein] + ATP = O-phospho-L-threonyl-[tau protein] + ADP + H(+). With respect to regulation, inhibited by lithium. Lithium inhibition is competitive with respect to magnesium but non-competitive with respect to the peptide substrate. Functionally, during cellular differentiation, may mediate an extracellular cyclic AMP stimulated signal transduction pathway that regulates prespore and prestalk B-cell proportions through inhibition of stalk cell formation and induction of prespore cell differentiation. The cAMP receptor carC appears to activate gskA via the tyrosine kinases zakA and zak2, to stimulate prespore differentiation, while carD appears to negatively regulate gskA, to promote prestalk formation. This Dictyostelium discoideum (Social amoeba) protein is Glycogen synthase kinase-3 (gskA).